Consider the following 511-residue polypeptide: Lariat debranching enzyme (511 aa).

A divalent metal cation contacts are provided by C52, H54, D83, and N128. The interval 168–198 (SGIYSHGDVEFSHYERPAFAERDVKSAYHVR) is lariat recognition loop. Residues H226, H278, and H280 each coordinate a divalent metal cation. Residues 473-511 (EDDFIIDRGHGSEEPEAKKSRLEEEKKKKKKKIENLKTL) form a disordered region. Positions 477-498 (IIDRGHGSEEPEAKKSRLEEEK) are enriched in basic and acidic residues.

It belongs to the lariat debranching enzyme family. Fe(2+) serves as cofactor. The cofactor is Zn(2+). Requires Mn(2+) as cofactor.

The protein resides in the nucleus. Active in presence of diverse metals including Fe(2+), Zn(2+), Mn(2+). Binds two metal cations in two adjacent alpha and beta metal-binding pockets. Cleaves the 2'-5' phosphodiester linkage at the branch point of lariat intron pre-mRNAs after splicing and converts them into linear molecules that are subsequently degraded. It thereby facilitates ribonucleotide turnover. This Caenorhabditis briggsae protein is Lariat debranching enzyme (dbr-1).